We begin with the raw amino-acid sequence, 398 residues long: MSESVHTNTSICSKGMLSVIVAQFLSAFGDNALLFATLALLKAQFYPDWSQPVLQMVFVGAYILFAPFVGQIADSFAKGRVMMFANGLKLAGAASICLGVNPFVGYTLVGIGAAAYSPAKYGILGELTTGNKLVKANGLMEASTIAAILLGSVAGGVLADWHVIAALVACTLAYAGAVVANLFIPKLVAARPGQSWQLAAMIRSFFCACVVLWRNGETRFSLVGTGLFWGAGVTLRFLVVLWVPVALGITDNATPTYLNAMVAVGIVVGAGAAAKLVTLETVSRCMPAGILIGVVVAMFSLQHALLPAYALLLLIGILGGFFVVPLNALLQERGKKSVGAGNAIAVQNLGENSTMLLMLGLYSLAVMVGVPAVATGIGFGVLFALAIAALWIWQRRQA.

12 helical membrane passes run 19 to 39 (VIVA…ATLA), 53 to 73 (VLQM…GQIA), 96 to 116 (ICLG…AAAY), 139 to 159 (LMEA…GVLA), 164 to 184 (IAAL…NLFI), 195 to 213 (SWQL…VVLW), 227 to 247 (LFWG…PVAL), 257 to 277 (YLNA…AKLV), 281 to 301 (TVSR…MFSL), 304 to 324 (ALLP…FFVV), 352 to 372 (NSTM…GVPA), and 373 to 393 (VATG…LWIW).

Belongs to the major facilitator superfamily. LplT (TC 2.A.1.42) family.

It localises to the cell inner membrane. Catalyzes the facilitated diffusion of 2-acyl-glycero-3-phosphoethanolamine (2-acyl-GPE) into the cell. The polypeptide is Lysophospholipid transporter LplT (Salmonella arizonae (strain ATCC BAA-731 / CDC346-86 / RSK2980)).